Consider the following 214-residue polypeptide: Pyridoxine/pyridoxamine 5'-phosphate oxidase (214 aa).

Substrate-binding positions include 9 to 12 and K67; that span reads RKDY. Residues 62–67, 77–78, R83, K84, and Q106 each bind FMN; these read RMVLLK and FT. Positions 124, 128, and 132 each coordinate substrate. FMN is bound by residues 141-142 and W186; that span reads QS. 192–194 lines the substrate pocket; it reads RLH. Residue R196 participates in FMN binding.

This sequence belongs to the pyridoxamine 5'-phosphate oxidase family. In terms of assembly, homodimer. FMN is required as a cofactor.

The catalysed reaction is pyridoxamine 5'-phosphate + O2 + H2O = pyridoxal 5'-phosphate + H2O2 + NH4(+). It catalyses the reaction pyridoxine 5'-phosphate + O2 = pyridoxal 5'-phosphate + H2O2. It participates in cofactor metabolism; pyridoxal 5'-phosphate salvage; pyridoxal 5'-phosphate from pyridoxamine 5'-phosphate: step 1/1. The protein operates within cofactor metabolism; pyridoxal 5'-phosphate salvage; pyridoxal 5'-phosphate from pyridoxine 5'-phosphate: step 1/1. Its function is as follows. Catalyzes the oxidation of either pyridoxine 5'-phosphate (PNP) or pyridoxamine 5'-phosphate (PMP) into pyridoxal 5'-phosphate (PLP). This Trichormus variabilis (strain ATCC 29413 / PCC 7937) (Anabaena variabilis) protein is Pyridoxine/pyridoxamine 5'-phosphate oxidase.